The chain runs to 210 residues: Holliday junction resolvase RecU (210 aa).

The tract at residues 1-34 is disordered; the sequence is MAFHYPNGQPYSNHETKQPKKQGRHTSPTTLYGK. Mg(2+)-binding residues include threonine 90, aspartate 92, glutamate 105, and glutamine 124.

The protein belongs to the RecU family. Requires Mg(2+) as cofactor.

The protein resides in the cytoplasm. It catalyses the reaction Endonucleolytic cleavage at a junction such as a reciprocal single-stranded crossover between two homologous DNA duplexes (Holliday junction).. Its function is as follows. Endonuclease that resolves Holliday junction intermediates in genetic recombination. Cleaves mobile four-strand junctions by introducing symmetrical nicks in paired strands. Promotes annealing of linear ssDNA with homologous dsDNA. Required for DNA repair, homologous recombination and chromosome segregation. The protein is Holliday junction resolvase RecU of Latilactobacillus sakei subsp. sakei (strain 23K) (Lactobacillus sakei subsp. sakei).